Here is a 538-residue protein sequence, read N- to C-terminus: NAD(P)H-quinone oxidoreductase chain 4 (538 aa).

Helical transmembrane passes span 11 to 31 (FPWL…VPFI), 43 to 63 (YALI…FKGF), 95 to 115 (MPLI…AWPV), 119 to 139 (PKLF…VFAV), 143 to 163 (LLFF…LAIW), 175 to 195 (FIIY…AMGF), 217 to 237 (GFQL…LPIV), 251 to 271 (TAPV…YALL), 285 to 305 (FAPL…LTSF), 314 to 334 (IAYS…SFSS), 340 to 360 (AMLQ…LVGA), 382 to 404 (IMFA…SGFI), 425 to 445 (IVVA…LLSM), and 472 to 492 (IYII…PKIM).

Belongs to the complex I subunit 4 family.

It localises to the cellular thylakoid membrane. It catalyses the reaction a plastoquinone + NADH + (n+1) H(+)(in) = a plastoquinol + NAD(+) + n H(+)(out). It carries out the reaction a plastoquinone + NADPH + (n+1) H(+)(in) = a plastoquinol + NADP(+) + n H(+)(out). Its function is as follows. NDH-1 shuttles electrons from NAD(P)H, via FMN and iron-sulfur (Fe-S) centers, to quinones in the respiratory chain. The immediate electron acceptor for the enzyme in this species is believed to be plastoquinone. Couples the redox reaction to proton translocation (for every two electrons transferred, four hydrogen ions are translocated across the cytoplasmic membrane), and thus conserves the redox energy in a proton gradient. The polypeptide is NAD(P)H-quinone oxidoreductase chain 4 (Prochlorococcus marinus (strain NATL1A)).